We begin with the raw amino-acid sequence, 104 residues long: Large ribosomal subunit protein uL24 (104 aa).

The protein belongs to the universal ribosomal protein uL24 family. As to quaternary structure, part of the 50S ribosomal subunit.

In terms of biological role, one of two assembly initiator proteins, it binds directly to the 5'-end of the 23S rRNA, where it nucleates assembly of the 50S subunit. One of the proteins that surrounds the polypeptide exit tunnel on the outside of the subunit. In Colwellia psychrerythraea (strain 34H / ATCC BAA-681) (Vibrio psychroerythus), this protein is Large ribosomal subunit protein uL24.